The sequence spans 194 residues: MEKSHFFAHLARMNLIQRWPLMRSVSTENISEHSLQVAFVAHALALIKNKKFDGNTNPERIALLGMFHDTSEVLTGDMPTPIKYYNPAIAEEYKKIELAAEQKLLSMLPEEFQEDYAPLLDSHCINKDDYVIVKQADSLCAYLKCLEELNAGNHEFAQAKKRLEKTLQTRSTPEMEYFLNTFVESFNLTLDEIS.

Substrate is bound by residues 18 to 19 (RW) and H33. An HD domain is found at 30 to 142 (ISEHSLQVAF…VKQADSLCAY (113 aa)). 3 residues coordinate a divalent metal cation: H33, H68, and D69. Substrate-binding positions include D69, 77–80 (DMPT), and D137. An a divalent metal cation-binding site is contributed by D137.

It belongs to the 5DNU family. Homodimer. The cofactor is a divalent metal cation.

Its subcellular location is the cytoplasm. It carries out the reaction a 2'-deoxyribonucleoside 5'-phosphate + H2O = a 2'-deoxyribonucleoside + phosphate. In terms of biological role, catalyzes the strictly specific dephosphorylation of 2'-deoxyribonucleoside 5'-monophosphates. This Photobacterium profundum (strain SS9) protein is 5'-deoxynucleotidase PBPRA2627.